A 210-amino-acid chain; its full sequence is Glutathione S-transferase 2 (210 aa).

One can recognise a GST N-terminal domain in the interval 1-80 (MDFYYLPLSA…YLVEKYGKQN (80 aa)). Glutathione contacts are provided by residues serine 9, 50–52 (HTI), and 64–66 (ESR). In terms of domain architecture, GST C-terminal spans 87 to 208 (CPKKRALINQ…AGCLEMKKYF (122 aa)).

This sequence belongs to the GST superfamily. Theta family. Homodimer.

The enzyme catalyses RX + glutathione = an S-substituted glutathione + a halide anion + H(+). Its function is as follows. Conjugation of reduced glutathione to a wide number of exogenous and endogenous hydrophobic electrophiles. The polypeptide is Glutathione S-transferase 2 (Gst2) (Musca domestica (House fly)).